An 86-amino-acid polypeptide reads, in one-letter code: MKTLLLTLVVLTIACLDLGYTKTCFNDDLTNPKTTELCRHSVYFCFKNSRIAGGVERMQRGCSLTCPDIKYNGKYIYCCTRDNCNA.

The signal sequence occupies residues 1–21 (MKTLLLTLVVLTIACLDLGYT). 4 cysteine pairs are disulfide-bonded: Cys24/Cys45, Cys38/Cys62, Cys66/Cys78, and Cys79/Cys84.

The protein belongs to the three-finger toxin family. Short-chain subfamily. Orphan group IX sub-subfamily. In terms of tissue distribution, expressed by the venom gland.

The protein localises to the secreted. This chain is Cardiotoxin homolog TA-ctx-like, found in Bungarus multicinctus (Many-banded krait).